The following is a 314-amino-acid chain: tRNA-cytidine(32) 2-sulfurtransferase (314 aa).

Positions 39–44 (SGGKDS) match the PP-loop motif motif. Residues Cys114, Cys117, and Cys205 each contribute to the [4Fe-4S] cluster site.

Belongs to the TtcA family. As to quaternary structure, homodimer. Mg(2+) serves as cofactor. [4Fe-4S] cluster is required as a cofactor.

The protein localises to the cytoplasm. The enzyme catalyses cytidine(32) in tRNA + S-sulfanyl-L-cysteinyl-[cysteine desulfurase] + AH2 + ATP = 2-thiocytidine(32) in tRNA + L-cysteinyl-[cysteine desulfurase] + A + AMP + diphosphate + H(+). It participates in tRNA modification. Catalyzes the ATP-dependent 2-thiolation of cytidine in position 32 of tRNA, to form 2-thiocytidine (s(2)C32). The sulfur atoms are provided by the cysteine/cysteine desulfurase (IscS) system. In Cupriavidus necator (strain ATCC 17699 / DSM 428 / KCTC 22496 / NCIMB 10442 / H16 / Stanier 337) (Ralstonia eutropha), this protein is tRNA-cytidine(32) 2-sulfurtransferase.